Consider the following 300-residue polypeptide: 4-hydroxy-tetrahydrodipicolinate synthase (300 aa).

Threonine 57 provides a ligand contact to pyruvate. Catalysis depends on tyrosine 145, which acts as the Proton donor/acceptor. The active-site Schiff-base intermediate with substrate is lysine 173. Residue isoleucine 213 participates in pyruvate binding.

This sequence belongs to the DapA family. Homotetramer; dimer of dimers.

It is found in the cytoplasm. The catalysed reaction is L-aspartate 4-semialdehyde + pyruvate = (2S,4S)-4-hydroxy-2,3,4,5-tetrahydrodipicolinate + H2O + H(+). It functions in the pathway amino-acid biosynthesis; L-lysine biosynthesis via DAP pathway; (S)-tetrahydrodipicolinate from L-aspartate: step 3/4. Functionally, catalyzes the condensation of (S)-aspartate-beta-semialdehyde [(S)-ASA] and pyruvate to 4-hydroxy-tetrahydrodipicolinate (HTPA). This is 4-hydroxy-tetrahydrodipicolinate synthase from Corynebacterium jeikeium (strain K411).